The following is a 428-amino-acid chain: Probable protein phosphatase 2C 12 (428 aa).

The region spanning lysine 24–isoleucine 293 is the PPM-type phosphatase domain. Mn(2+)-binding residues include aspartate 69, glycine 70, aspartate 245, and aspartate 284. Positions alanine 301–lysine 331 are disordered.

This sequence belongs to the PP2C family. Requires Mg(2+) as cofactor. Mn(2+) serves as cofactor.

It carries out the reaction O-phospho-L-seryl-[protein] + H2O = L-seryl-[protein] + phosphate. The catalysed reaction is O-phospho-L-threonyl-[protein] + H2O = L-threonyl-[protein] + phosphate. The sequence is that of Probable protein phosphatase 2C 12 from Arabidopsis thaliana (Mouse-ear cress).